Consider the following 859-residue polypeptide: Cadherin-related family member 1 (859 aa).

The first 21 residues, 1–21 (MRRGPQVALVLGLLCIYLAQA), serve as a signal peptide directing secretion. At 22–701 (NFAPHFFDNG…LIQTKDNPMK (680 aa)) the chain is on the extracellular side. Cadherin domains follow at residues 36-135 (NGNM…APRF), 136-247 (LQEP…APIF), 248-354 (VGTP…PPTF), 360-473 (PQNK…VPKF), 474-577 (TSHY…YPQF), and 569-691 (DVND…MAAF). N-linked (GlcNAc...) asparagine glycosylation is found at Asn58 and Asn89. Residues Asn288 and Asn297 are each glycosylated (N-linked (GlcNAc...) asparagine). Residues 702–722 (AVGVLAGVMAIVVAITVLIST) form a helical membrane-spanning segment. Topologically, residues 723–859 (ATFWRNKKSN…KKSLGNKAYV (137 aa)) are cytoplasmic. The disordered stretch occupies residues 789–859 (PPRAPALPPP…KKSLGNKAYV (71 aa)). The span at 790 to 800 (PRAPALPPPPK) shows a compositional bias: pro residues. Over residues 802–816 (ASSTVAQQTVPTVSG) the composition is skewed to polar residues. Low complexity predominate over residues 817–827 (SLTPQPSQQLP).

As to quaternary structure, interacts with PROM1. Post-translationally, undergoes proteolytic cleavage; produces a soluble 95 kDa N-terminal fragment and a 25 kDa cell-associated C-terminal fragment. Expressed in the retina. Strongly expressed by the mitral and tufted cells in the main and accessory olfactory bulbs. Also expressed in the septum and olfactory cortex. Weakly expressed in the triangular septal nucleus and piriform cortex.

Its subcellular location is the cell membrane. In terms of biological role, potential calcium-dependent cell-adhesion protein. May be required for the structural integrity of the outer segment (OS) of photoreceptor cells. In Rattus norvegicus (Rat), this protein is Cadherin-related family member 1 (Cdhr1).